A 595-amino-acid chain; its full sequence is Adenine deaminase 2 (595 aa).

This sequence belongs to the metallo-dependent hydrolases superfamily. Adenine deaminase family. Mn(2+) is required as a cofactor.

It catalyses the reaction adenine + H2O + H(+) = hypoxanthine + NH4(+). The chain is Adenine deaminase 2 from Rhizobium etli (strain ATCC 51251 / DSM 11541 / JCM 21823 / NBRC 15573 / CFN 42).